Reading from the N-terminus, the 322-residue chain is Probable heme-iron transport system permease protein IsdF (322 aa).

9 helical membrane passes run 9–29 (LLFL…FVTG), 61–81 (ILIA…LQAA), 89–109 (ANII…MLFI), 114–134 (FYLP…IILL), 143–163 (VSMI…LEIL), 179–199 (IWSD…LTLL), 233–253 (VFLA…GIIV), 267–287 (VLIP…DLLG), and 294–314 (LEIP…IYLI).

The protein belongs to the binding-protein-dependent transport system permease family. FecCD subfamily.

Its subcellular location is the cell membrane. Part of the binding-protein-dependent transport system for heme-iron. Responsible for the translocation of the substrate across the membrane. This chain is Probable heme-iron transport system permease protein IsdF (isdF), found in Staphylococcus aureus (strain MSSA476).